A 185-amino-acid chain; its full sequence is Large ribosomal subunit protein uL5 (185 aa).

The protein belongs to the universal ribosomal protein uL5 family. In terms of assembly, part of the 50S ribosomal subunit; part of the 5S rRNA/L5/L18/L25 subcomplex. Contacts the 5S rRNA and the P site tRNA. Forms a bridge to the 30S subunit in the 70S ribosome.

This is one of the proteins that bind and probably mediate the attachment of the 5S RNA into the large ribosomal subunit, where it forms part of the central protuberance. In the 70S ribosome it contacts protein S13 of the 30S subunit (bridge B1b), connecting the 2 subunits; this bridge is implicated in subunit movement. Contacts the P site tRNA; the 5S rRNA and some of its associated proteins might help stabilize positioning of ribosome-bound tRNAs. The chain is Large ribosomal subunit protein uL5 from Magnetococcus marinus (strain ATCC BAA-1437 / JCM 17883 / MC-1).